Reading from the N-terminus, the 636-residue chain is Rust resistance kinase Lr10 (636 aa).

Positions 1-24 are cleaved as a signal peptide; it reads MSKLLVIALLLLPLINHGIYLATA. Residues 25–276 are Extracellular-facing; it reads WDDQDFFKYC…MPDPHGSHIK (252 aa). N-linked (GlcNAc...) asparagine glycans are attached at residues N56, N177, and N222. The chain crosses the membrane as a helical span at residues 277-297; that stretch reads VIAATSSVAAFVALLLTVATV. Over 298 to 636 the chain is Cytoplasmic; the sequence is LYLSLKTRYN…FVSSENELMS (339 aa). One can recognise a Protein kinase domain in the interval 339 to 628; it reads RRFKEKVGQG…SLQMPPKPFV (290 aa). Residues 345–353 and K367 each bind ATP; that span reads VGQGGFGSV. D466 serves as the catalytic Proton acceptor.

This sequence belongs to the protein kinase superfamily. Ser/Thr protein kinase family. As to expression, specifically expressed in the aerial parts of the plant.

The protein resides in the cell membrane. The catalysed reaction is L-seryl-[protein] + ATP = O-phospho-L-seryl-[protein] + ADP + H(+). It carries out the reaction L-threonyl-[protein] + ATP = O-phospho-L-threonyl-[protein] + ADP + H(+). This is Rust resistance kinase Lr10 from Triticum aestivum (Wheat).